The primary structure comprises 259 residues: Phosphatidylglycerol--prolipoprotein diacylglyceryl transferase (259 aa).

4 consecutive transmembrane segments (helical) span residues 12-32 (LSLH…VYLA), 46-66 (IIDF…IYYV), 83-103 (IWNG…VLFV), and 109-129 (VLNP…AQAI). Residue arginine 131 participates in a 1,2-diacyl-sn-glycero-3-phospho-(1'-sn-glycerol) binding. 3 helical membrane-spanning segments follow: residues 167–187 (VPTF…IMVW), 194–214 (LLDG…RLVI), and 226–246 (GIRV…VFIF).

This sequence belongs to the Lgt family.

The protein localises to the cell membrane. It carries out the reaction L-cysteinyl-[prolipoprotein] + a 1,2-diacyl-sn-glycero-3-phospho-(1'-sn-glycerol) = an S-1,2-diacyl-sn-glyceryl-L-cysteinyl-[prolipoprotein] + sn-glycerol 1-phosphate + H(+). The protein operates within protein modification; lipoprotein biosynthesis (diacylglyceryl transfer). Functionally, catalyzes the transfer of the diacylglyceryl group from phosphatidylglycerol to the sulfhydryl group of the N-terminal cysteine of a prolipoprotein, the first step in the formation of mature lipoproteins. This is Phosphatidylglycerol--prolipoprotein diacylglyceryl transferase from Streptococcus equi subsp. zooepidemicus (strain H70).